Here is a 422-residue protein sequence, read N- to C-terminus: Golgi-associated RAB2 interactor protein 2 (422 aa).

The tract at residues 353 to 404 (PVESEANTSKEMKDKTSEEKMPDFQSTALKAEESRSLRTESNTSVLSPHIKS) is disordered. Positions 360–374 (TSKEMKDKTSEEKMP) are enriched in basic and acidic residues.

It belongs to the GARIN family. In terms of assembly, interacts with CALM1. As to expression, expressed in spermatozoa (at protein level).

Its subcellular location is the cell projection. It localises to the cilium. The protein resides in the flagellum. Seems to play a role in sperm motility. The polypeptide is Golgi-associated RAB2 interactor protein 2 (Homo sapiens (Human)).